We begin with the raw amino-acid sequence, 553 residues long: CTP synthase (553 aa).

Residues Met1–Leu270 form an amidoligase domain region. CTP is bound at residue Ser13. Ser13 is a UTP binding site. ATP-binding positions include Ser14–Ile19 and Asp71. Residues Asp71 and Glu144 each coordinate Mg(2+). CTP-binding positions include Asp151–Glu153, Lys191–Gln196, and Lys227. UTP-binding positions include Lys191–Gln196 and Lys227. One can recognise a Glutamine amidotransferase type-1 domain in the interval Thr295–Thr547. Gly356 serves as a coordination point for L-glutamine. Cys383 serves as the catalytic Nucleophile; for glutamine hydrolysis. Residues Leu384–Gln387, Glu407, and Arg473 each bind L-glutamine. Catalysis depends on residues His520 and Glu522.

Belongs to the CTP synthase family. Homotetramer.

It carries out the reaction UTP + L-glutamine + ATP + H2O = CTP + L-glutamate + ADP + phosphate + 2 H(+). The enzyme catalyses L-glutamine + H2O = L-glutamate + NH4(+). It catalyses the reaction UTP + NH4(+) + ATP = CTP + ADP + phosphate + 2 H(+). The protein operates within pyrimidine metabolism; CTP biosynthesis via de novo pathway; CTP from UDP: step 2/2. Its activity is regulated as follows. Allosterically activated by GTP, when glutamine is the substrate; GTP has no effect on the reaction when ammonia is the substrate. The allosteric effector GTP functions by stabilizing the protein conformation that binds the tetrahedral intermediate(s) formed during glutamine hydrolysis. Inhibited by the product CTP, via allosteric rather than competitive inhibition. Functionally, catalyzes the ATP-dependent amination of UTP to CTP with either L-glutamine or ammonia as the source of nitrogen. Regulates intracellular CTP levels through interactions with the four ribonucleotide triphosphates. The sequence is that of CTP synthase from Burkholderia mallei (strain NCTC 10247).